A 324-amino-acid chain; its full sequence is COP9 signalosome complex subunit 6 (324 aa).

One can recognise an MPN domain in the interval 38-171; sequence VALHPLVILN…VSVFESVIDI (134 aa).

Belongs to the peptidase M67A family. CSN6 subfamily. As to quaternary structure, component of the CSN complex, composed of COPS1/GPS1, COPS2, COPS3, COPS4, COPS5, COPS6, COPS7 (COPS7A or COPS7B), COPS8 and COPS9. In the complex, it probably interacts directly with COPS2, COPS4, COPS5, COPS7 (COPS7A or COPS7B) and COPS9. Interacts with the translation initiation factor EIF3S6. Interacts weakly with RBX1. Directly interacts with COP1 and 14-3-3 protein sigma/SFN. Interacts with ERCC6.

The protein resides in the cytoplasm. It localises to the nucleus. In terms of biological role, component of the COP9 signalosome complex (CSN), a complex involved in various cellular and developmental processes. The CSN complex is an essential regulator of the ubiquitin (Ubl) conjugation pathway by mediating the deneddylation of the cullin subunits of SCF-type E3 ligase complexes, leading to decrease the Ubl ligase activity of SCF-type complexes such as SCF, CSA or DDB2. The complex is also involved in phosphorylation of p53/TP53, c-jun/JUN, IkappaBalpha/NFKBIA, ITPK1 and IRF8, possibly via its association with CK2 and PKD kinases. CSN-dependent phosphorylation of TP53 and JUN promotes and protects degradation by the Ubl system, respectively. Has some glucocorticoid receptor-responsive activity. Stabilizes COP1 through reducing COP1 auto-ubiquitination and decelerating COP1 turnover rate, hence regulates the ubiquitination of COP1 targets, including SFN. This Mus musculus (Mouse) protein is COP9 signalosome complex subunit 6 (Cops6).